Reading from the N-terminus, the 130-residue chain is Organic solute transporter subunit beta (130 aa).

The Extracellular segment spans residues methionine 1 to proline 35. Residues tryptophan 36 to glycine 56 form a helical membrane-spanning segment. Residues arginine 57–serine 130 are Cytoplasmic-facing. Positions leucine 99–serine 130 are disordered. The segment covering methionine 110–aspartate 124 has biased composition (basic and acidic residues).

Belongs to the OST-beta family. As to quaternary structure, interacts with SLC51A. The Ost-alpha/Ost-beta complex is a heterodimer composed of alpha (SLC51A) and beta (SLC51B) subunit; induces the transport of SLC51A from the endoplasmic reticulum to the plasma membrane.

Its subcellular location is the cell membrane. It carries out the reaction taurocholate(out) = taurocholate(in). The enzyme catalyses estrone 3-sulfate(out) = estrone 3-sulfate(in). It catalyses the reaction dehydroepiandrosterone 3-sulfate(out) = dehydroepiandrosterone 3-sulfate(in). The catalysed reaction is tauroursodeoxycholate(out) = tauroursodeoxycholate(in). It carries out the reaction glycoursodeoxycholate(out) = glycoursodeoxycholate(in). The enzyme catalyses glycocholate(out) = glycocholate(in). It catalyses the reaction taurochenodeoxycholate(out) = taurochenodeoxycholate(in). The catalysed reaction is glycochenodeoxycholate(out) = glycochenodeoxycholate(in). It carries out the reaction taurodeoxycholate(out) = taurodeoxycholate(in). The enzyme catalyses glycodeoxycholate(out) = glycodeoxycholate(in). It catalyses the reaction prostaglandin E2(out) = prostaglandin E2(in). In terms of biological role, essential component of the Ost-alpha/Ost-beta complex, a heterodimer that acts as the intestinal basolateral transporter responsible for bile acid export from enterocytes into portal blood. The Ost-alpha/Ost-beta complex efficiently transports the major species of bile acids (taurocholate). Taurine conjugates are transported more efficiently across the basolateral membrane than glycine-conjugated bile acids. Can also transport steroids such as estrone 3-sulfate and dehydroepiandrosterone 3-sulfate, therefore playing a role in the enterohepatic circulation of sterols. Able to transport eicosanoids such as prostaglandin E2. Modulates SLC51A glycosylation, membrane trafficking and stability activities. This Bos taurus (Bovine) protein is Organic solute transporter subunit beta (SLC51B).